Reading from the N-terminus, the 433-residue chain is 5-methylthioadenosine/S-adenosylhomocysteine deaminase (433 aa).

Residues His67 and His69 each coordinate Zn(2+). Glu96, Arg148, and His186 together coordinate substrate. His213 contacts Zn(2+). Glu216 and Asp301 together coordinate substrate. Asp301 contributes to the Zn(2+) binding site.

It belongs to the metallo-dependent hydrolases superfamily. MTA/SAH deaminase family. The cofactor is Zn(2+).

It catalyses the reaction S-adenosyl-L-homocysteine + H2O + H(+) = S-inosyl-L-homocysteine + NH4(+). The catalysed reaction is S-methyl-5'-thioadenosine + H2O + H(+) = S-methyl-5'-thioinosine + NH4(+). Functionally, catalyzes the deamination of 5-methylthioadenosine and S-adenosyl-L-homocysteine into 5-methylthioinosine and S-inosyl-L-homocysteine, respectively. Is also able to deaminate adenosine. The polypeptide is 5-methylthioadenosine/S-adenosylhomocysteine deaminase (Desulforamulus reducens (strain ATCC BAA-1160 / DSM 100696 / MI-1) (Desulfotomaculum reducens)).